Reading from the N-terminus, the 281-residue chain is 2-dehydro-3-deoxyphosphooctonate aldolase (281 aa).

This sequence belongs to the KdsA family.

The protein resides in the cytoplasm. It carries out the reaction D-arabinose 5-phosphate + phosphoenolpyruvate + H2O = 3-deoxy-alpha-D-manno-2-octulosonate-8-phosphate + phosphate. The protein operates within carbohydrate biosynthesis; 3-deoxy-D-manno-octulosonate biosynthesis; 3-deoxy-D-manno-octulosonate from D-ribulose 5-phosphate: step 2/3. Its pathway is bacterial outer membrane biogenesis; lipopolysaccharide biosynthesis. The polypeptide is 2-dehydro-3-deoxyphosphooctonate aldolase (Pseudomonas syringae pv. syringae (strain B728a)).